We begin with the raw amino-acid sequence, 39 residues long: Photosystem II reaction center protein L (39 aa).

Residues 18–38 (SLYLGLLSVFVLGILFSSYFF) form a helical membrane-spanning segment.

It belongs to the PsbL family. As to quaternary structure, PSII is composed of 1 copy each of membrane proteins PsbA, PsbB, PsbC, PsbD, PsbE, PsbF, PsbH, PsbI, PsbJ, PsbK, PsbL, PsbM, PsbT, PsbX, PsbY, Psb30/Ycf12, peripheral proteins PsbO, CyanoQ (PsbQ), PsbU, PsbV and a large number of cofactors. It forms dimeric complexes.

The protein localises to the cellular thylakoid membrane. One of the components of the core complex of photosystem II (PSII). PSII is a light-driven water:plastoquinone oxidoreductase that uses light energy to abstract electrons from H(2)O, generating O(2) and a proton gradient subsequently used for ATP formation. It consists of a core antenna complex that captures photons, and an electron transfer chain that converts photonic excitation into a charge separation. This subunit is found at the monomer-monomer interface and is required for correct PSII assembly and/or dimerization. This chain is Photosystem II reaction center protein L, found in Prochlorococcus marinus (strain MIT 9301).